We begin with the raw amino-acid sequence, 246 residues long: MKKPPVPLLQNGVRADGRLPDQMREVKISVGVVSNADGSAMVSYGATTAVAAVYGPREMHPRHLSLPDRGVMRVRYHMAPFSTKDERKSPTPSRREIEISKVLREALEPAVLLEQYPRSRIDVFIEIIQADGSTRVASLTAASLALADAGIYMRDLVVGVSVGLVDGVVVLDLNGLEDNYGEGDLPVGYMPNLKRFVLLQLDGAWKREVFLQALNLAVKGAEYVYQIARDALKNKYMSIAEEIYGR.

It belongs to the RNase PH family. Rrp41 subfamily. As to quaternary structure, component of the archaeal exosome complex. Forms a hexameric ring-like arrangement composed of 3 Rrp41-Rrp42 heterodimers. The hexameric ring associates with a trimer of Rrp4 and/or Csl4 subunits.

It localises to the cytoplasm. Catalytic component of the exosome, which is a complex involved in RNA degradation. Has 3'-&gt;5' exoribonuclease activity. Can also synthesize heteromeric RNA-tails. The polypeptide is Exosome complex component Rrp41 (Pyrobaculum arsenaticum (strain DSM 13514 / JCM 11321 / PZ6)).